A 599-amino-acid chain; its full sequence is ATP-binding cassette sub-family E member 1 (599 aa).

2 4Fe-4S ferredoxin-type domains span residues 7–37 (RIAI…MGKL) and 46–75 (KIAW…IVNL). Lys20 participates in a covalent cross-link: Glycyl lysine isopeptide (Lys-Gly) (interchain with G-Cter in ubiquitin). 2 consecutive ABC transporter domains span residues 79–315 (LEKE…FLDG) and 342–562 (VKKM…LSQL). Residues 110 to 117 (GTNGIGKS) and 379 to 386 (GENGTGKT) each bind ATP. Ser417 is modified (phosphoserine). Phosphothreonine is present on Thr550.

Belongs to the ABC transporter superfamily. ABCE family. As to quaternary structure, (Microbial infection) Interacts with Chandipura virus matrix protein. Interacts with PINK1. Interacts with CNOT4. Interacts with PELO. Probably heterodimerizes with RNASEL; this interaction inhibits RNASEL. In terms of assembly, (Microbial infection) Interacts with HIV-1 proteins Vif and Gag. As to quaternary structure, (Microbial infection) Interacts with HIV-2 protein Gag. Ubiquitinated by CNOT4. Ubiquitination mediates the recruitment of autophagy receptors to the mitochondrial outer membrane and initiates mitophagy.

Its subcellular location is the cytoplasm. It is found in the mitochondrion. It catalyses the reaction GTP + H2O = GDP + phosphate + H(+). It carries out the reaction ATP + H2O = ADP + phosphate + H(+). The enzyme catalyses CTP + H2O = CDP + phosphate + H(+). The catalysed reaction is UTP + H2O = UDP + phosphate + H(+). Functionally, nucleoside-triphosphatase (NTPase) involved in ribosome recycling by mediating ribosome disassembly. Able to hydrolyze ATP, GTP, UTP and CTP. Splits ribosomes into free 60S subunits and tRNA- and mRNA-bound 40S subunits. Acts either after canonical termination facilitated by release factors (ETF1/eRF1) or after recognition of stalled and vacant ribosomes by mRNA surveillance factors (PELO/Pelota). Involved in the No-Go Decay (NGD) pathway: recruited to stalled ribosomes by the Pelota-HBS1L complex, and drives the disassembly of stalled ribosomes, followed by degradation of damaged mRNAs as part of the NGD pathway. Also plays a role in quality control of translation of mitochondrial outer membrane-localized mRNA. As part of the PINK1-regulated signaling, ubiquitinated by CNOT4 upon mitochondria damage; this modification generates polyubiquitin signals that recruit autophagy receptors to the mitochondrial outer membrane and initiate mitophagy. RNASEL-specific protein inhibitor which antagonizes the binding of 2-5A (5'-phosphorylated 2',5'-linked oligoadenylates) to RNASEL. Negative regulator of the anti-viral effect of the interferon-regulated 2-5A/RNASEL pathway. In terms of biological role, (Microbial infection) May act as a chaperone for post-translational events during HIV-1 capsid assembly. (Microbial infection) Plays a role in the down-regulation of the 2-5A/RNASEL pathway during encephalomyocarditis virus (EMCV) and HIV-1 infections. This chain is ATP-binding cassette sub-family E member 1 (ABCE1), found in Homo sapiens (Human).